A 280-amino-acid polypeptide reads, in one-letter code: uncharacterized protein (280 aa).

Residues Asn75, Asn98, Asn107, Asn143, Asn158, Asn170, Asn192, Asn207, Asn224, and Asn230 are each glycosylated (N-linked (GlcNAc...) asparagine; by host). The chain crosses the membrane as a helical span at residues 235–255; it reads AFTYGSWGVAMLLFAAVMVLV.

It belongs to the RL11 family.

It is found in the host membrane. This is an uncharacterized protein from Human cytomegalovirus (strain Merlin) (HHV-5).